Consider the following 189-residue polypeptide: MKSTAPSYLKHHFLIAMPQMADPNFAQTLIYLIEHGPEGAMGLIVNRPSGLSLADVLEQLRPDEPIPALCQSLPIFAGGPVQTDRGFVLHSAEQQFQATLMLGPLGMSTSQDVLFAIADGQGPQRHFVALGYAGWEAGQLEAELADNTWLSCPADPQILFDLPHDQRLQAAAASLGVDLRLLSTQVGHA.

This sequence belongs to the UPF0301 (AlgH) family.

In Stutzerimonas stutzeri (strain A1501) (Pseudomonas stutzeri), this protein is UPF0301 protein PST_3956.